Reading from the N-terminus, the 410-residue chain is UDP-N-acetylglucosamine--N-acetylmuramyl-(pentapeptide) pyrophosphoryl-undecaprenol N-acetylglucosamine transferase (410 aa).

The interval 1–34 (MKDTVSQPAGGRGATAPRPADAASPSCGSSPSAD) is disordered. The span at 14-34 (ATAPRPADAASPSCGSSPSAD) shows a compositional bias: low complexity. Residues 45–47 (TAG), N167, R204, S238, and Q334 each bind UDP-N-acetyl-alpha-D-glucosamine.

It belongs to the glycosyltransferase 28 family. MurG subfamily.

The protein resides in the cell membrane. It catalyses the reaction di-trans,octa-cis-undecaprenyl diphospho-N-acetyl-alpha-D-muramoyl-L-alanyl-D-glutamyl-meso-2,6-diaminopimeloyl-D-alanyl-D-alanine + UDP-N-acetyl-alpha-D-glucosamine = di-trans,octa-cis-undecaprenyl diphospho-[N-acetyl-alpha-D-glucosaminyl-(1-&gt;4)]-N-acetyl-alpha-D-muramoyl-L-alanyl-D-glutamyl-meso-2,6-diaminopimeloyl-D-alanyl-D-alanine + UDP + H(+). It functions in the pathway cell wall biogenesis; peptidoglycan biosynthesis. Cell wall formation. Catalyzes the transfer of a GlcNAc subunit on undecaprenyl-pyrophosphoryl-MurNAc-pentapeptide (lipid intermediate I) to form undecaprenyl-pyrophosphoryl-MurNAc-(pentapeptide)GlcNAc (lipid intermediate II). This chain is UDP-N-acetylglucosamine--N-acetylmuramyl-(pentapeptide) pyrophosphoryl-undecaprenol N-acetylglucosamine transferase, found in Mycobacterium bovis (strain ATCC BAA-935 / AF2122/97).